The primary structure comprises 20 residues: Unknown protein NF003 from 2D-PAGE (20 aa).

This chain is Unknown protein NF003 from 2D-PAGE, found in Naegleria fowleri (Brain eating amoeba).